The primary structure comprises 788 residues: Ribonucleoside-diphosphate reductase subunit alpha (788 aa).

One can recognise an ATP-cone domain in the interval 2-92 (ITVVKRNGRI…LYDLYHKVSG (91 aa)). Residues lysine 6, 12–18 (EPLDITK), and threonine 52 each bind ATP. Threonine 200 lines the GDP pocket. Cysteine 216 and cysteine 497 are oxidised to a cystine. DTTP contacts are provided by residues 223–225 (DNI) and arginine 253. Asparagine 424 is a GDP binding site. Residue asparagine 424 is the Proton acceptor of the active site. Cysteine 426 (cysteine radical intermediate) is an active-site residue. Residues glutamate 428 and 661 to 663 (SSI) contribute to the GDP site. Glutamate 428 (proton acceptor) is an active-site residue.

Belongs to the ribonucleoside diphosphate reductase large chain family. In terms of assembly, tetramer of two alpha and two beta subunits.

It catalyses the reaction a 2'-deoxyribonucleoside 5'-diphosphate + [thioredoxin]-disulfide + H2O = a ribonucleoside 5'-diphosphate + [thioredoxin]-dithiol. Its activity is regulated as follows. Under complex allosteric control mediated by deoxynucleoside triphosphates and ATP binding to separate specificity and activation sites on the alpha subunit. The type of nucleotide bound at the specificity site determines substrate preference. It seems probable that ATP makes the enzyme reduce CDP and UDP, dGTP favors ADP reduction and dTTP favors GDP reduction. Stimulated by ATP and inhibited by dATP binding to the activity site. In terms of biological role, provides the precursors necessary for DNA synthesis. Catalyzes the biosynthesis of deoxyribonucleotides from the corresponding ribonucleotides. This chain is Ribonucleoside-diphosphate reductase subunit alpha (nrdA), found in Helicobacter pylori (strain J99 / ATCC 700824) (Campylobacter pylori J99).